Reading from the N-terminus, the 440-residue chain is NADH-quinone oxidoreductase subunit D 2 (440 aa).

This sequence belongs to the complex I 49 kDa subunit family. NDH-1 is composed of 14 different subunits. Subunits NuoB, C, D, E, F, and G constitute the peripheral sector of the complex.

It is found in the cell membrane. It carries out the reaction a quinone + NADH + 5 H(+)(in) = a quinol + NAD(+) + 4 H(+)(out). Its function is as follows. NDH-1 shuttles electrons from NADH, via FMN and iron-sulfur (Fe-S) centers, to quinones in the respiratory chain. The immediate electron acceptor for the enzyme in this species is believed to be a menaquinone. Couples the redox reaction to proton translocation (for every two electrons transferred, four hydrogen ions are translocated across the cytoplasmic membrane), and thus conserves the redox energy in a proton gradient. The sequence is that of NADH-quinone oxidoreductase subunit D 2 from Streptomyces coelicolor (strain ATCC BAA-471 / A3(2) / M145).